The chain runs to 236 residues: 1-(5-phosphoribosyl)-5-[(5-phosphoribosylamino)methylideneamino] imidazole-4-carboxamide isomerase (236 aa).

Asp-8 (proton acceptor) is an active-site residue. Asp-127 functions as the Proton donor in the catalytic mechanism.

It belongs to the HisA/HisF family.

It is found in the cytoplasm. The enzyme catalyses 1-(5-phospho-beta-D-ribosyl)-5-[(5-phospho-beta-D-ribosylamino)methylideneamino]imidazole-4-carboxamide = 5-[(5-phospho-1-deoxy-D-ribulos-1-ylimino)methylamino]-1-(5-phospho-beta-D-ribosyl)imidazole-4-carboxamide. It functions in the pathway amino-acid biosynthesis; L-histidine biosynthesis; L-histidine from 5-phospho-alpha-D-ribose 1-diphosphate: step 4/9. This chain is 1-(5-phosphoribosyl)-5-[(5-phosphoribosylamino)methylideneamino] imidazole-4-carboxamide isomerase, found in Sulfurimonas denitrificans (strain ATCC 33889 / DSM 1251) (Thiomicrospira denitrificans (strain ATCC 33889 / DSM 1251)).